Consider the following 930-residue polypeptide: Isoleucine--tRNA ligase (930 aa).

The 'HIGH' region signature appears at 57–67; sequence PYANGNIHVGH. Glutamate 554 contributes to the L-isoleucyl-5'-AMP binding site. The short motif at 595–599 is the 'KMSKS' region element; sequence KMSKS. Position 598 (lysine 598) interacts with ATP. Zn(2+) is bound by residues cysteine 888, cysteine 891, cysteine 908, and cysteine 911.

The protein belongs to the class-I aminoacyl-tRNA synthetase family. IleS type 1 subfamily. As to quaternary structure, monomer. Zn(2+) serves as cofactor.

Its subcellular location is the cytoplasm. The enzyme catalyses tRNA(Ile) + L-isoleucine + ATP = L-isoleucyl-tRNA(Ile) + AMP + diphosphate. Its function is as follows. Catalyzes the attachment of isoleucine to tRNA(Ile). As IleRS can inadvertently accommodate and process structurally similar amino acids such as valine, to avoid such errors it has two additional distinct tRNA(Ile)-dependent editing activities. One activity is designated as 'pretransfer' editing and involves the hydrolysis of activated Val-AMP. The other activity is designated 'posttransfer' editing and involves deacylation of mischarged Val-tRNA(Ile). The sequence is that of Isoleucine--tRNA ligase from Streptococcus pneumoniae (strain JJA).